The sequence spans 175 residues: Alkyl hydroperoxide reductase AhpD (175 aa).

The Proton donor role is filled by Cys131. Cys131 and Cys134 form a disulfide bridge. The active-site Cysteine sulfenic acid (-SOH) intermediate is the Cys134.

It belongs to the AhpD family.

It carries out the reaction N(6)-[(R)-dihydrolipoyl]-L-lysyl-[lipoyl-carrier protein] + a hydroperoxide = N(6)-[(R)-lipoyl]-L-lysyl-[lipoyl-carrier protein] + an alcohol + H2O. Antioxidant protein with alkyl hydroperoxidase activity. Required for the reduction of the AhpC active site cysteine residues and for the regeneration of the AhpC enzyme activity. This is Alkyl hydroperoxide reductase AhpD from Brucella abortus (strain 2308).